Consider the following 243-residue polypeptide: 1-(5-phosphoribosyl)-5-[(5-phosphoribosylamino)methylideneamino] imidazole-4-carboxamide isomerase (243 aa).

Catalysis depends on aspartate 10, which acts as the Proton acceptor. Catalysis depends on aspartate 129, which acts as the Proton donor.

The protein belongs to the HisA/HisF family.

The protein resides in the cytoplasm. The catalysed reaction is 1-(5-phospho-beta-D-ribosyl)-5-[(5-phospho-beta-D-ribosylamino)methylideneamino]imidazole-4-carboxamide = 5-[(5-phospho-1-deoxy-D-ribulos-1-ylimino)methylamino]-1-(5-phospho-beta-D-ribosyl)imidazole-4-carboxamide. Its pathway is amino-acid biosynthesis; L-histidine biosynthesis; L-histidine from 5-phospho-alpha-D-ribose 1-diphosphate: step 4/9. This is 1-(5-phosphoribosyl)-5-[(5-phosphoribosylamino)methylideneamino] imidazole-4-carboxamide isomerase from Saccharopolyspora erythraea (strain ATCC 11635 / DSM 40517 / JCM 4748 / NBRC 13426 / NCIMB 8594 / NRRL 2338).